A 164-amino-acid polypeptide reads, in one-letter code: FMN reductase (NADH) RutF (164 aa).

Belongs to the non-flavoprotein flavin reductase family. RutF subfamily.

It carries out the reaction FMNH2 + NAD(+) = FMN + NADH + 2 H(+). Functionally, catalyzes the reduction of FMN to FMNH2 which is used to reduce pyrimidine by RutA via the Rut pathway. The protein is FMN reductase (NADH) RutF of Escherichia coli O81 (strain ED1a).